The following is a 179-amino-acid chain: MSRIGKRLINIPSQVTVSIKDQVFSVKGPKGELSKQIPYGIQVVQQNDHLVVERVAESLLARKLHGLCRTLVSNLVQGVFQGFERRLEIQGVGYRAQMDGKKLVLNIGFSHPVVIEPPTEIQLQVENNTNIIIKGIDKELVGKLAAEIRAVRPPEPYKGKGIRYLGENVKRKVGKAGKK.

Belongs to the universal ribosomal protein uL6 family. In terms of assembly, part of the 50S ribosomal subunit.

Its subcellular location is the plastid. The protein resides in the cyanelle. In terms of biological role, binds 23S rRNA. The sequence is that of Large ribosomal subunit protein uL6c (rpl6) from Cyanophora paradoxa.